The following is a 333-amino-acid chain: uncharacterized protein (333 aa).

This sequence to bacterial alkanal monooxygenase alpha and beta chains.

This is an uncharacterized protein from Bacillus subtilis (strain 168).